A 91-amino-acid chain; its full sequence is Acylphosphatase (91 aa).

Positions 3–91 (TVTMRVTGLV…EKFTRFSVVY (89 aa)) constitute an Acylphosphatase-like domain. Catalysis depends on residues Arg18 and Asn36.

It belongs to the acylphosphatase family.

It catalyses the reaction an acyl phosphate + H2O = a carboxylate + phosphate + H(+). The sequence is that of Acylphosphatase (acyP) from Lactobacillus johnsonii (strain CNCM I-12250 / La1 / NCC 533).